The following is a 224-amino-acid chain: F420-dependent NADP reductase (224 aa).

NADP(+) is bound by residues 9–12 (TGDQ), 31–32 (SR), Lys36, Val74, Val100, and Ala145.

It belongs to the F420-dependent NADP reductase family. In terms of assembly, homotetramer.

The enzyme catalyses reduced coenzyme F420-(gamma-L-Glu)(n) + NADP(+) = oxidized coenzyme F420-(gamma-L-Glu)(n) + NADPH + 2 H(+). In terms of biological role, catalyzes the reduction of NADP(+) with F420H(2) via hydride transfer, and the reverse reaction, i.e. the reduction of F420 with NADPH. Probably functions in the regeneration of NADPH required in biosynthetic reactions. This chain is F420-dependent NADP reductase, found in Methanothermobacter marburgensis (strain ATCC BAA-927 / DSM 2133 / JCM 14651 / NBRC 100331 / OCM 82 / Marburg) (Methanobacterium thermoautotrophicum).